The chain runs to 796 residues: AUGMIN subunit 5 (796 aa).

Positions 79 to 120 are disordered; sequence HGGSSNASIGSSVNPGKEESKSKGRRKDKTVTGESSSYAEDR. A compositionally biased stretch (polar residues) spans 80–92; the sequence is GGSSNASIGSSVN. 2 coiled-coil regions span residues 115–191 and 462–501; these read SYAE…EATR and GKER…LKKK.

This sequence belongs to the HAUS5 family. Part of the augmin complex composed of 8 subunits. The complex acts on microtubules and interacts with gamma-tubulin in spindles and the phragmoplast.

The protein resides in the cytoplasm. It localises to the cytoskeleton. It is found in the spindle. The protein localises to the phragmoplast. In terms of biological role, involved in microtubules reorganization during spindle and phragmoplast development. In Arabidopsis thaliana (Mouse-ear cress), this protein is AUGMIN subunit 5.